The chain runs to 243 residues: 1-(5-phosphoribosyl)-5-[(5-phosphoribosylamino)methylideneamino] imidazole-4-carboxamide isomerase (243 aa).

Residue Asp-14 is the Proton acceptor of the active site. Catalysis depends on Asp-135, which acts as the Proton donor.

This sequence belongs to the HisA/HisF family.

It localises to the cytoplasm. The enzyme catalyses 1-(5-phospho-beta-D-ribosyl)-5-[(5-phospho-beta-D-ribosylamino)methylideneamino]imidazole-4-carboxamide = 5-[(5-phospho-1-deoxy-D-ribulos-1-ylimino)methylamino]-1-(5-phospho-beta-D-ribosyl)imidazole-4-carboxamide. The protein operates within amino-acid biosynthesis; L-histidine biosynthesis; L-histidine from 5-phospho-alpha-D-ribose 1-diphosphate: step 4/9. The polypeptide is 1-(5-phosphoribosyl)-5-[(5-phosphoribosylamino)methylideneamino] imidazole-4-carboxamide isomerase (Rubrobacter xylanophilus (strain DSM 9941 / JCM 11954 / NBRC 16129 / PRD-1)).